We begin with the raw amino-acid sequence, 258 residues long: Na(+)-translocating NADH-quinone reductase subunit C (258 aa).

A helical transmembrane segment spans residues leucine 14 to glycine 34. The residue at position 226 (serine 226) is an FMN phosphoryl serine.

Belongs to the NqrC family. As to quaternary structure, composed of six subunits; NqrA, NqrB, NqrC, NqrD, NqrE and NqrF. It depends on FMN as a cofactor.

The protein localises to the cell inner membrane. The enzyme catalyses a ubiquinone + n Na(+)(in) + NADH + H(+) = a ubiquinol + n Na(+)(out) + NAD(+). Its function is as follows. NQR complex catalyzes the reduction of ubiquinone-1 to ubiquinol by two successive reactions, coupled with the transport of Na(+) ions from the cytoplasm to the periplasm. NqrA to NqrE are probably involved in the second step, the conversion of ubisemiquinone to ubiquinol. The sequence is that of Na(+)-translocating NADH-quinone reductase subunit C from Neisseria meningitidis serogroup A / serotype 4A (strain DSM 15465 / Z2491).